The sequence spans 26 residues: Dermaseptin-J3 (26 aa).

Val26 carries the valine amide modification.

Expressed by the skin glands.

The protein resides in the secreted. Its function is as follows. Has antimicrobial activity. The sequence is that of Dermaseptin-J3 from Phasmahyla jandaia (Jandaia leaf frog).